A 103-amino-acid polypeptide reads, in one-letter code: Large ribosomal subunit protein bL21 (103 aa).

Belongs to the bacterial ribosomal protein bL21 family. In terms of assembly, part of the 50S ribosomal subunit. Contacts protein L20.

Its function is as follows. This protein binds to 23S rRNA in the presence of protein L20. In Acinetobacter baumannii (strain AB307-0294), this protein is Large ribosomal subunit protein bL21.